A 101-amino-acid polypeptide reads, in one-letter code: Apolipoprotein C-II (101 aa).

Residues 1–22 (MGIRYLLVLVLVLLVLGCEVQG) form the signal peptide. The lipid binding stretch occupies residues 66-74 (TMDEKIREI). A lipoprotein lipase cofactor region spans residues 78–101 (STAAVSTYAGIFTDQLLSMLKGDQ).

The protein belongs to the apolipoprotein C2 family. In terms of processing, proapolipoprotein C-II is synthesized as a sialic acid containing glycoprotein which is subsequently desialylated prior to its proteolytic processing. Proapolipoprotein C-II, the major form found in plasma undergoes proteolytic cleavage of its N-terminal hexapeptide to generate apolipoprotein C-II, which occurs as the minor form in plasma.

It localises to the secreted. Component of chylomicrons, very low-density lipoproteins (VLDL), low-density lipoproteins (LDL), and high-density lipoproteins (HDL) in plasma. Plays an important role in lipoprotein metabolism as an activator of lipoprotein lipase. Both proapolipoprotein C-II and apolipoprotein C-II can activate lipoprotein lipase. The chain is Apolipoprotein C-II (APOC2) from Leptonychotes weddellii (Weddell seal).